The sequence spans 514 residues: piRNA biogenesis protein EXD1 (514 aa).

One can recognise a 3'-5' exonuclease domain in the interval 30–122; sequence LHAERTWMEK…HGKLCWLQVA (93 aa). The segment at 384–422 is disordered; it reads SLNKQATNPQHLPPTEEGETSEDSSNKLICTKSKGSEDQ.

This sequence belongs to the EXD1 family. As to quaternary structure, homodimer. Component of the PET complex, at least composed of EXD1, PIWIL2, TDRD12 and piRNAs.

It is found in the cytoplasm. Functionally, RNA-binding component of the PET complex, a multiprotein complex required for the processing of piRNAs during spermatogenesis. The piRNA metabolic process mediates the repression of transposable elements during meiosis by forming complexes composed of piRNAs and Piwi proteins and governs the methylation and subsequent repression of transposable elements, preventing their mobilization, which is essential for the germline integrity. The PET complex is required during the secondary piRNAs metabolic process for the PIWIL2 slicing-triggered loading of PIWIL4 piRNAs. In the PET complex, EXD1 probably acts as an RNA adapter. EXD1 is an inactive exonuclease. This chain is piRNA biogenesis protein EXD1 (EXD1), found in Homo sapiens (Human).